The primary structure comprises 338 residues: Phenylalanine--tRNA ligase alpha subunit (338 aa).

Glu-252 provides a ligand contact to Mg(2+).

Belongs to the class-II aminoacyl-tRNA synthetase family. Phe-tRNA synthetase alpha subunit type 1 subfamily. In terms of assembly, tetramer of two alpha and two beta subunits. Mg(2+) is required as a cofactor.

The protein localises to the cytoplasm. It carries out the reaction tRNA(Phe) + L-phenylalanine + ATP = L-phenylalanyl-tRNA(Phe) + AMP + diphosphate + H(+). The polypeptide is Phenylalanine--tRNA ligase alpha subunit (Pseudomonas fluorescens (strain SBW25)).